A 482-amino-acid polypeptide reads, in one-letter code: UDP-glucose 6-dehydrogenase 2 (482 aa).

NAD(+)-binding positions include 8–13 (GAGYVG), Asp33, Arg38, 86–90 (VNTPT), 127–128 (ST), and Glu163. Substrate contacts are provided by residues 159–163 (EFLAE), 218–225 (KLAANAFL), and 258–271 (RIGP…VGFG). Catalysis depends on Cys274, which acts as the Nucleophile. 274–277 (CFQK) contacts NAD(+). 336–337 (FK) is a substrate binding site. Residue Arg344 coordinates NAD(+). Ser395 is modified (phosphoserine). Substrate is bound at residue Arg449.

It belongs to the UDP-glucose/GDP-mannose dehydrogenase family.

The enzyme catalyses UDP-alpha-D-glucose + 2 NAD(+) + H2O = UDP-alpha-D-glucuronate + 2 NADH + 3 H(+). It participates in nucleotide-sugar biosynthesis; UDP-alpha-D-glucuronate biosynthesis; UDP-alpha-D-glucuronate from UDP-alpha-D-glucose: step 1/1. In terms of biological role, involved in the biosynthesis of UDP-glucuronic acid (UDP-GlcA), providing nucleotide sugars for cell-wall polymers. The protein is UDP-glucose 6-dehydrogenase 2 (UGD2) of Oryza sativa subsp. japonica (Rice).